An 85-amino-acid polypeptide reads, in one-letter code: Small ribosomal subunit protein bS16 (85 aa).

Belongs to the bacterial ribosomal protein bS16 family.

This Clostridium kluyveri (strain NBRC 12016) protein is Small ribosomal subunit protein bS16.